The primary structure comprises 129 residues: Large ribosomal subunit protein uL22 (129 aa).

Belongs to the universal ribosomal protein uL22 family. Part of the 50S ribosomal subunit.

Its function is as follows. This protein binds specifically to 23S rRNA; its binding is stimulated by other ribosomal proteins, e.g. L4, L17, and L20. It is important during the early stages of 50S assembly. It makes multiple contacts with different domains of the 23S rRNA in the assembled 50S subunit and ribosome. Functionally, the globular domain of the protein is located near the polypeptide exit tunnel on the outside of the subunit, while an extended beta-hairpin is found that lines the wall of the exit tunnel in the center of the 70S ribosome. This is Large ribosomal subunit protein uL22 from Rhizobium meliloti (strain 1021) (Ensifer meliloti).